Consider the following 283-residue polypeptide: Bifunctional protein FolD (283 aa).

Residues 166–168 (GRS), serine 191, and threonine 232 contribute to the NADP(+) site.

Belongs to the tetrahydrofolate dehydrogenase/cyclohydrolase family. Homodimer.

The enzyme catalyses (6R)-5,10-methylene-5,6,7,8-tetrahydrofolate + NADP(+) = (6R)-5,10-methenyltetrahydrofolate + NADPH. The catalysed reaction is (6R)-5,10-methenyltetrahydrofolate + H2O = (6R)-10-formyltetrahydrofolate + H(+). It functions in the pathway one-carbon metabolism; tetrahydrofolate interconversion. Functionally, catalyzes the oxidation of 5,10-methylenetetrahydrofolate to 5,10-methenyltetrahydrofolate and then the hydrolysis of 5,10-methenyltetrahydrofolate to 10-formyltetrahydrofolate. This Halothermothrix orenii (strain H 168 / OCM 544 / DSM 9562) protein is Bifunctional protein FolD.